A 546-amino-acid polypeptide reads, in one-letter code: Chaperonin GroEL (546 aa).

ATP contacts are provided by residues Thr-30–Pro-33, Lys-51, Asp-87–Thr-91, Gly-415, Asn-479–Ala-481, and Asp-495. The segment at Lys-526 to Met-546 is disordered. Residues Gly-534–Met-546 show a composition bias toward gly residues.

This sequence belongs to the chaperonin (HSP60) family. As to quaternary structure, forms a cylinder of 14 subunits composed of two heptameric rings stacked back-to-back. Interacts with the co-chaperonin GroES.

The protein resides in the cytoplasm. The catalysed reaction is ATP + H2O + a folded polypeptide = ADP + phosphate + an unfolded polypeptide.. Its function is as follows. Together with its co-chaperonin GroES, plays an essential role in assisting protein folding. The GroEL-GroES system forms a nano-cage that allows encapsulation of the non-native substrate proteins and provides a physical environment optimized to promote and accelerate protein folding. The polypeptide is Chaperonin GroEL (Burkholderia cepacia (Pseudomonas cepacia)).